Here is a 91-residue protein sequence, read N- to C-terminus: Small ribosomal subunit protein uS19 (91 aa).

This sequence belongs to the universal ribosomal protein uS19 family.

Protein S19 forms a complex with S13 that binds strongly to the 16S ribosomal RNA. This is Small ribosomal subunit protein uS19 from Lactobacillus delbrueckii subsp. bulgaricus (strain ATCC 11842 / DSM 20081 / BCRC 10696 / JCM 1002 / NBRC 13953 / NCIMB 11778 / NCTC 12712 / WDCM 00102 / Lb 14).